The chain runs to 471 residues: MFLLYLFTSFAAVSGVLGSSPSYNGLGLTPQMGWDNWNTFACDVSEQLLLDTADRISEIGLKDLGYTYVILDDCWSSGRTANGTLVADKEKFPNGMSHVADHLHNNNFLFGMYSSAGEYTCAGYPGSLGHEEEDAEFFASNGVDYLKYDNCYNKGQFGAPETSYKRYKAMSDALNKTGRPIFYSLCNWGQDLTHYWGSDIANSWRMSGDIYPQFTRPDSRCPCDGDQFDCAYAGFHCSIMNILNKAAPMGQNAGIGGWNDLDNLEVGVGNLTDDEEKAHFSMWAMVKSPLVIGADVNHLKASSYSIYSQASVIAINQDPKGVPATRVWRHQVPQTDKYGQGEIQFWSGPLDNGDQVIALLNGGIKPRPMNTNLEEIFFDSYLGFEQLSSNWDIYDLWANRVDNATSANILNNNSVGNATIYNATALSYKDGMAKNDTRLFGTKIGSISPDGLLNTTVPAHGIAFYRLRRST.

An N-terminal signal peptide occupies residues 1–18 (MFLLYLFTSFAAVSGVLG). Residues Cys-42 and Cys-74 are joined by a disulfide bond. Residues Asp-72 and Asp-73 each contribute to the substrate site. N-linked (GlcNAc...) asparagine glycosylation is present at Asn-82. A disulfide bridge links Cys-121 with Cys-151. Lys-147 contributes to the substrate binding site. Asp-149 functions as the Nucleophile in the catalytic mechanism. An N-linked (GlcNAc...) asparagine glycan is attached at Asn-175. Arg-205 is a binding site for substrate. The active-site Proton donor is Asp-209. Cystine bridges form between Cys-221-Cys-237 and Cys-223-Cys-230. Gln-251 is a substrate binding site. N-linked (GlcNAc...) asparagine glycans are attached at residues Asn-270, Asn-403, Asn-412, Asn-417, Asn-422, Asn-435, and Asn-454.

Belongs to the glycosyl hydrolase 27 family. As to quaternary structure, homotetramer.

Its subcellular location is the secreted. It carries out the reaction Hydrolysis of terminal, non-reducing alpha-D-galactose residues in alpha-D-galactosides, including galactose oligosaccharides, galactomannans and galactolipids.. This chain is Alpha-galactosidase (MEL), found in Saccharomyces pastorianus (strain ATCC 76529 / Carlsberg bottom yeast no.1 / CBS 1513 / CLIB 176 / NBRC 1167 / NCYC 396 / NRRL Y-12693) (Saaz-type lager yeast).